Consider the following 1910-residue polypeptide: A disintegrin and metalloproteinase with thrombospondin motifs 20 (1910 aa).

A signal peptide spans 1–21; the sequence is MWVAKWLTGLLYHLSLFITRS. The propeptide occupies 22-253; that stretch reads WEVDFHPRQE…DERRHSRKKR (232 aa). 2 N-linked (GlcNAc...) asparagine glycosylation sites follow: asparagine 92 and asparagine 191. One can recognise a Peptidase M12B domain in the interval 259 to 467; it reads RYIEIMVTAD…GYGECLLDKP (209 aa). 11 disulfide bridges follow: cysteine 334-cysteine 387, cysteine 363-cysteine 369, cysteine 381-cysteine 462, cysteine 419-cysteine 446, cysteine 489-cysteine 511, cysteine 500-cysteine 521, cysteine 506-cysteine 540, cysteine 534-cysteine 545, cysteine 568-cysteine 605, cysteine 572-cysteine 610, and cysteine 583-cysteine 595. Histidine 403 is a Zn(2+) binding site. Residue glutamate 404 is part of the active site. Zn(2+)-binding residues include histidine 407 and histidine 413. An N-linked (GlcNAc...) asparagine glycan is attached at asparagine 445. The region spanning 468-555 is the Disintegrin domain; the sequence is DEEIYNLPSE…VNKETETRPV (88 aa). The TSP type-1 1 domain maps to 556–611; that stretch reads NGEWGPWEPYSSCSRTCGGGIESATRRCNRPEPRNGGNYCVGRRMKFRSCNTDSCP. Residues asparagine 702, asparagine 717, asparagine 728, asparagine 809, and asparagine 870 are each glycosylated (N-linked (GlcNAc...) asparagine). Positions 724-846 are spacer; it reads TGVFNSSHYG…FNIPLEERSD (123 aa). 14 TSP type-1 domains span residues 846-904, 905-961, 966-1023, 1024-1073, 1076-1135, 1152-1206, 1207-1264, 1304-1356, 1358-1416, 1417-1475, 1476-1531, 1535-1588, 1589-1652, and 1654-1710; these read DMFT…NTDC, ELRW…QELC, VFTR…FSCP, SWAA…SPCE, TCAS…TPCS, KMAQ…DCFT, PCGE…AACP, RGNQ…QCGP, PCPQ…HACP, ADVS…VRCP, SWKA…QDCV, GMER…NPPC, NYIV…INSC, and HLAT…NDCK. N-linked (GlcNAc...) asparagine glycosylation is present at asparagine 1061. Asparagine 1456 carries N-linked (GlcNAc...) asparagine glycosylation. 2 N-linked (GlcNAc...) asparagine glycosylation sites follow: asparagine 1542 and asparagine 1572. The 200-residue stretch at 1711–1910 folds into the GON domain; that stretch reads SFTTCKEIQV…MTTGLPIQVI (200 aa). N-linked (GlcNAc...) asparagine glycans are attached at residues asparagine 1763, asparagine 1781, and asparagine 1852.

Requires Zn(2+) as cofactor. Post-translationally, the precursor is cleaved by a furin endopeptidase. Glycosylated. Can be O-fucosylated by POFUT2 on a serine or a threonine residue found within the consensus sequence C1-X(2)-(S/T)-C2-G of the TSP type-1 repeat domains where C1 and C2 are the first and second cysteine residue of the repeat, respectively. Fucosylated repeats can then be further glycosylated by the addition of a beta-1,3-glucose residue by the glucosyltransferase, B3GALTL. Fucosylation mediates the efficient secretion of ADAMTS family members. Can also be C-glycosylated with one or two mannose molecules on tryptophan residues within the consensus sequence W-X-X-W of the TPRs, and N-glycosylated. These other glycosylations can also facilitate secretion. In terms of tissue distribution, very sparingly expressed, although is detected at low levels in testis, prostate, ovary, heart, placenta, lung and pancreas. Overexpressed in several brain, colon and breast carcinomas.

Its subcellular location is the secreted. The protein localises to the extracellular space. It localises to the extracellular matrix. Its function is as follows. May play a role in tissue-remodeling process occurring in both normal and pathological conditions. May have a protease-independent function in the transport from the endoplasmic reticulum to the Golgi apparatus of secretory cargos, mediated by the GON domain. The polypeptide is A disintegrin and metalloproteinase with thrombospondin motifs 20 (ADAMTS20) (Homo sapiens (Human)).